We begin with the raw amino-acid sequence, 69 residues long: Beta-defensin 1 (69 aa).

An N-terminal signal peptide occupies residues 1–21 (MKTHYFLLVMLFFLFSQMELG). Residues 22–32 (AGILTSLGRRT) constitute a propeptide that is removed on maturation. Disulfide bonds link Cys-37–Cys-66, Cys-44–Cys-59, and Cys-49–Cys-67.

The protein belongs to the beta-defensin family. As to quaternary structure, monomer. Homodimer. As to expression, highly expressed in kidney.

Its subcellular location is the secreted. It is found in the membrane. Functionally, has bactericidal activity. May act as a ligand for C-C chemokine receptor CCR6. Positively regulates the sperm motility and bactericidal activity in a CCR6-dependent manner. Binds to CCR6 and triggers Ca2+ mobilization in the sperm which is important for its motility. The polypeptide is Beta-defensin 1 (Defb1) (Rattus norvegicus (Rat)).